The primary structure comprises 1281 residues: Enterobactin synthase component F (1281 aa).

The elongation/condensation stretch occupies residues 1-301 (MSQHLPLVAA…NVLPLGIHIA (301 aa)). The segment at 486–891 (SYREMHEQVV…ALPDVKQAVT (406 aa)) is adenylation. The Carrier domain occupies 975-1050 (APKAGSETII…KLATIIDGEE (76 aa)). Ser-1010 is modified (O-(pantetheine 4'-phosphoryl)serine). Positions 1070 to 1281 (PTLFCFHPAS…GPIIRATLNR (212 aa)) are thioesterase. The Proton acceptor; for thioesterase activity role is filled by His-1259.

Belongs to the ATP-dependent AMP-binding enzyme family. EntF subfamily. Proteins EntB, EntD, EntE and EntF are the component of the enterobactin synthase. Components probably do not form a stable complex. EntF acts as a catalytic monomer. Pantetheine 4'-phosphate serves as cofactor. Post-translationally, 4'-phosphopantetheine is transferred from CoA to a specific serine of apo-EntF by EntD. Holo-EntF so formed is then acylated with seryl-AMP.

It localises to the cytoplasm. It carries out the reaction 3 2,3-dihydroxybenzoate + 3 L-serine + 6 ATP = enterobactin + 6 AMP + 6 diphosphate + 4 H(+). The catalysed reaction is holo-[peptidyl-carrier protein] + L-serine + ATP = L-seryl-[peptidyl-carrier protein] + AMP + diphosphate. It participates in siderophore biosynthesis; enterobactin biosynthesis. Its function is as follows. Involved in the biosynthesis of the siderophore enterobactin (enterochelin), which is a macrocyclic trimeric lactone of N-(2,3-dihydroxybenzoyl)-serine. EntF catalyzes the activation of L-serine via ATP-dependent PPi exchange reaction to form seryladenylate. Activated L-serine is loaded onto the peptidyl carrier domain via a thioester linkage to the phosphopanthetheine moiety, forming seryl-S-Ppant-EntF. EntF acts then as the sole catalyst for the formation of the three amide and three ester linkages found in enterobactin, using seryladenylate and 2,3-dihydroxybenzoate-S-Ppant-EntB (DHB-S-Ppant-EntB) as substrates, via the formation of a DHB-Ser-S-Ppant-EntF intermediate. This is Enterobactin synthase component F (entF) from Shigella flexneri.